A 150-amino-acid polypeptide reads, in one-letter code: Large ribosomal subunit protein uL15 (150 aa).

The tract at residues 1 to 51 (MKLHTLRPAKGSVKTSKRIGRGTGSGRGGTSTKGHKGAKSRSGYSSKIGFE) is disordered. The segment covering 21–31 (RGTGSGRGGTS) has biased composition (gly residues).

Belongs to the universal ribosomal protein uL15 family. In terms of assembly, part of the 50S ribosomal subunit.

In terms of biological role, binds to the 23S rRNA. The chain is Large ribosomal subunit protein uL15 from Cytophaga hutchinsonii (strain ATCC 33406 / DSM 1761 / CIP 103989 / NBRC 15051 / NCIMB 9469 / D465).